A 647-amino-acid chain; its full sequence is Homologous recombination OB-fold protein (647 aa).

Phosphoserine is present on Ser47. Disordered regions lie at residues 284 to 361, 380 to 399, and 581 to 631; these read ARGT…GPQG, SRTP…RRFP, and SFLK…DDLD. Asymmetric dimethylarginine is present on residues Arg285, Arg295, Arg329, and Arg337. A compositionally biased stretch (polar residues) spans 287-308; sequence TIQSSPQNRFPCQPFQSPSSWL. Over residues 319–332 the composition is skewed to low complexity; sequence TPNSSCSTPSRTSS. Positions 380 to 390 are enriched in polar residues; sequence SRTPQQPTHPS. Over residues 618–631 the composition is skewed to acidic residues; sequence ASPEEELPEADDLD.

In terms of assembly, interacts with MCM8; this interaction is necessary for MCM8-MCM9 helicase complex recruitment to DNA damage sites. Interacts with RPA1; this interaction associates HROB with the RPA complex.

The protein resides in the nucleus. It localises to the chromosome. Functionally, DNA-binding protein involved in homologous recombination that acts by recruiting the MCM8-MCM9 helicase complex to sites of DNA damage to promote DNA repair synthesis. This Homo sapiens (Human) protein is Homologous recombination OB-fold protein.